Consider the following 205-residue polypeptide: Small ribosomal subunit protein uS4 (205 aa).

Positions 110-172 (RRLQTIIYRK…VGSPITKEKL (63 aa)) constitute an S4 RNA-binding domain. The segment at 173–205 (MAKPQPASAPKAAAAPKAAAAPAEAAAAPKKEE) is disordered. Positions 174–205 (AKPQPASAPKAAAAPKAAAAPAEAAAAPKKEE) are enriched in low complexity.

It belongs to the universal ribosomal protein uS4 family. As to quaternary structure, part of the 30S ribosomal subunit. Contacts protein S5. The interaction surface between S4 and S5 is involved in control of translational fidelity.

One of the primary rRNA binding proteins, it binds directly to 16S rRNA where it nucleates assembly of the body of the 30S subunit. Its function is as follows. With S5 and S12 plays an important role in translational accuracy. This is Small ribosomal subunit protein uS4 from Methanocella arvoryzae (strain DSM 22066 / NBRC 105507 / MRE50).